The chain runs to 326 residues: Neuferricin homolog (326 aa).

Residues 1–34 form the signal peptide; it reads MEKNRRKKDDAGVMTKTLAGVAALTFLVSFICSS. One can recognise a Cytochrome b5 heme-binding domain in the interval 98–197; that stretch reads KHVFTPEQLH…KEYPLVGVVA (100 aa).

It belongs to the cytochrome b5 family. MAPR subfamily.

Its subcellular location is the secreted. Functionally, heme-binding protein. This is Neuferricin homolog from Caenorhabditis briggsae.